A 62-amino-acid chain; its full sequence is Photosystem II reaction center protein Z (62 aa).

Helical transmembrane passes span 8 to 28 (AVFALIATSSILLISVPVVFA) and 41 to 61 (FSGTSLWIALVFLVGILNSLI).

This sequence belongs to the PsbZ family. In terms of assembly, PSII is composed of 1 copy each of membrane proteins PsbA, PsbB, PsbC, PsbD, PsbE, PsbF, PsbH, PsbI, PsbJ, PsbK, PsbL, PsbM, PsbT, PsbY, PsbZ, Psb30/Ycf12, at least 3 peripheral proteins of the oxygen-evolving complex and a large number of cofactors. It forms dimeric complexes.

It is found in the plastid. Its subcellular location is the chloroplast thylakoid membrane. Functionally, may control the interaction of photosystem II (PSII) cores with the light-harvesting antenna, regulates electron flow through the 2 photosystem reaction centers. PSII is a light-driven water plastoquinone oxidoreductase, using light energy to abstract electrons from H(2)O, generating a proton gradient subsequently used for ATP formation. This Lotus japonicus (Lotus corniculatus var. japonicus) protein is Photosystem II reaction center protein Z.